Consider the following 423-residue polypeptide: Serine--tRNA ligase (423 aa).

L-serine is bound at residue 230-232 (TAE). 261-263 (RSE) contacts ATP. Glu-284 contributes to the L-serine binding site. An ATP-binding site is contributed by 348–351 (EISS). Ser-383 provides a ligand contact to L-serine.

The protein belongs to the class-II aminoacyl-tRNA synthetase family. Type-1 seryl-tRNA synthetase subfamily. As to quaternary structure, homodimer. The tRNA molecule binds across the dimer.

Its subcellular location is the cytoplasm. The catalysed reaction is tRNA(Ser) + L-serine + ATP = L-seryl-tRNA(Ser) + AMP + diphosphate + H(+). The enzyme catalyses tRNA(Sec) + L-serine + ATP = L-seryl-tRNA(Sec) + AMP + diphosphate + H(+). Its pathway is aminoacyl-tRNA biosynthesis; selenocysteinyl-tRNA(Sec) biosynthesis; L-seryl-tRNA(Sec) from L-serine and tRNA(Sec): step 1/1. Its function is as follows. Catalyzes the attachment of serine to tRNA(Ser). Is also able to aminoacylate tRNA(Sec) with serine, to form the misacylated tRNA L-seryl-tRNA(Sec), which will be further converted into selenocysteinyl-tRNA(Sec). This is Serine--tRNA ligase from Levilactobacillus brevis (strain ATCC 367 / BCRC 12310 / CIP 105137 / JCM 1170 / LMG 11437 / NCIMB 947 / NCTC 947) (Lactobacillus brevis).